A 472-amino-acid polypeptide reads, in one-letter code: MGGKTLYDKLWDDHLVQQRDDGSALLYIDRHIVHEVTSPQAFEGLRLAKRKPWRVDSVVATPDHNVPTTQKERASGVEGIEDPTSRIQVQTLDSNCDELGILEFKINDARQGIVHVVGPETGACLPGMTIVCGDSHTSTNGALGALAMGIGTSEVEHVLATQCLVAKKMKSMLVKVDGKLGAGVTPKDVVLAIIGKIGTAGGTGYAIEFGGEVMRSMSMEGRLTVCNMAIEAGARAGMVAVDDITIDYVKGRSFAPKGEHWEQAVAAWRDLKSDDDAVFDAVVELRGEEILPQVSWGTSPEMVLPVDASIPDPELETDAVKQNGMRRALQYMGLKAGQAIKDIYVDRVFIGSCTNSRIEDIRAAAEVVKGRTKAASVKEAIVVPGSGAVKAQAEAEGLDKIFVEAGLEWREPGCSMCLAMNADKLGDGEHCASTSNRNFEGRQGYGGRTHLVSPAMAAAAAIAGHFVDVREF.

The segment at 61 to 80 (TPDHNVPTTQKERASGVEGI) is disordered. The [4Fe-4S] cluster site is built by C353, C414, and C417.

It belongs to the aconitase/IPM isomerase family. LeuC type 1 subfamily. In terms of assembly, heterodimer of LeuC and LeuD. It depends on [4Fe-4S] cluster as a cofactor.

It carries out the reaction (2R,3S)-3-isopropylmalate = (2S)-2-isopropylmalate. It functions in the pathway amino-acid biosynthesis; L-leucine biosynthesis; L-leucine from 3-methyl-2-oxobutanoate: step 2/4. Its function is as follows. Catalyzes the isomerization between 2-isopropylmalate and 3-isopropylmalate, via the formation of 2-isopropylmaleate. This chain is 3-isopropylmalate dehydratase large subunit, found in Saccharophagus degradans (strain 2-40 / ATCC 43961 / DSM 17024).